The following is a 255-amino-acid chain: Imidazole glycerol phosphate synthase subunit HisF (255 aa).

Active-site residues include Asp12 and Asp131.

It belongs to the HisA/HisF family. In terms of assembly, heterodimer of HisH and HisF.

The protein localises to the cytoplasm. The enzyme catalyses 5-[(5-phospho-1-deoxy-D-ribulos-1-ylimino)methylamino]-1-(5-phospho-beta-D-ribosyl)imidazole-4-carboxamide + L-glutamine = D-erythro-1-(imidazol-4-yl)glycerol 3-phosphate + 5-amino-1-(5-phospho-beta-D-ribosyl)imidazole-4-carboxamide + L-glutamate + H(+). It functions in the pathway amino-acid biosynthesis; L-histidine biosynthesis; L-histidine from 5-phospho-alpha-D-ribose 1-diphosphate: step 5/9. IGPS catalyzes the conversion of PRFAR and glutamine to IGP, AICAR and glutamate. The HisF subunit catalyzes the cyclization activity that produces IGP and AICAR from PRFAR using the ammonia provided by the HisH subunit. This Ruthia magnifica subsp. Calyptogena magnifica protein is Imidazole glycerol phosphate synthase subunit HisF.